Reading from the N-terminus, the 251-residue chain is Probable-ribose 5-phosphate isomerase (251 aa).

Belongs to the ribose 5-phosphate isomerase family.

It catalyses the reaction aldehydo-D-ribose 5-phosphate = D-ribulose 5-phosphate. It participates in carbohydrate degradation; pentose phosphate pathway; D-ribose 5-phosphate from D-ribulose 5-phosphate (non-oxidative stage): step 1/1. This is Probable-ribose 5-phosphate isomerase (rpia-1) from Caenorhabditis elegans.